A 470-amino-acid polypeptide reads, in one-letter code: Probable tocopherol cyclase, chloroplastic (470 aa).

A chloroplast-targeting transit peptide spans 1–61; it reads MDLAAAAVAV…APTPRDRALR (61 aa). Residues 14–48 are disordered; that stretch reads RPAPPPRRCAPRRHRRALAPRAASSSPSPSTAVAA. Residues 22 to 31 are compositionally biased toward basic residues; that stretch reads CAPRRHRRAL. Residues 32-48 show a composition bias toward low complexity; it reads APRAASSSPSPSTAVAA.

As to expression, expressed in the roots, stems, leaves and spikelets.

Its subcellular location is the plastid. It localises to the chloroplast. The protein localises to the plastoglobule. It participates in cofactor biosynthesis; tocopherol biosynthesis. Its function is as follows. Involved in the synthesis of both tocopherols and tocotrienols (vitamin E), which presumably protect photosynthetic complexes from oxidative stress. Catalyzes the conversion of 2-methyl-6-phytyl-1,4-hydroquinone and 2,3-dimethyl-5-phytyl-1,4-hydroquinone (DMPQ) to delta- and gamma-tocopherol respectively. Also converts 2,3-dimethyl-5-geranylgeranyl-1,4-hydroquinone (DMGQ) to gamma-tocotrienol. The chain is Probable tocopherol cyclase, chloroplastic (VTE1) from Oryza sativa subsp. japonica (Rice).